Reading from the N-terminus, the 409-residue chain is Phospho-N-acetylmuramoyl-pentapeptide-transferase (409 aa).

A run of 10 helical transmembrane segments spans residues 23-43 (YITFRSALAIIMSLLISTIFG), 73-93 (TPTMGGLIIIFSTLLPVLLLA), 95-115 (LNNIYIILLIVTTIWMGAIGF), 132-152 (GIFKVIGQVGLGLIVGTTLYF), 214-234 (YAWLIFIPIVIFIITAVSNGA), 247-267 (TSAISVIAIGVFTFVSGNVIF), 279-299 (SGEMTVFIAAFVGALIGFLWY), 305-325 (AVFMGDTGSLTIGGIIAVLAI), 331-351 (MLIPVFCGIFLAENLSVVLQV), and 386-406 (KIVTRFWIVGILLAIVSIVTL).

This sequence belongs to the glycosyltransferase 4 family. MraY subfamily. Mg(2+) serves as cofactor.

Its subcellular location is the cell inner membrane. The catalysed reaction is UDP-N-acetyl-alpha-D-muramoyl-L-alanyl-gamma-D-glutamyl-meso-2,6-diaminopimeloyl-D-alanyl-D-alanine + di-trans,octa-cis-undecaprenyl phosphate = di-trans,octa-cis-undecaprenyl diphospho-N-acetyl-alpha-D-muramoyl-L-alanyl-D-glutamyl-meso-2,6-diaminopimeloyl-D-alanyl-D-alanine + UMP. Its pathway is cell wall biogenesis; peptidoglycan biosynthesis. Its function is as follows. Catalyzes the initial step of the lipid cycle reactions in the biosynthesis of the cell wall peptidoglycan: transfers peptidoglycan precursor phospho-MurNAc-pentapeptide from UDP-MurNAc-pentapeptide onto the lipid carrier undecaprenyl phosphate, yielding undecaprenyl-pyrophosphoryl-MurNAc-pentapeptide, known as lipid I. The protein is Phospho-N-acetylmuramoyl-pentapeptide-transferase of Flavobacterium psychrophilum (strain ATCC 49511 / DSM 21280 / CIP 103535 / JIP02/86).